Consider the following 1099-residue polypeptide: Carbamoyl phosphate synthase large chain (1099 aa).

The tract at residues 1–402 (MPKRTDLKSV…ALQKALRSLE (402 aa)) is carboxyphosphate synthetic domain. ATP is bound by residues Arg129, Arg169, Gly175, Gly176, Glu208, Ile210, Glu215, Gly241, Val242, His243, Gln285, and Glu299. Residues 133–328 (KGVVERCGAE…IAKIATKLSL (196 aa)) enclose the ATP-grasp 1 domain. The Mg(2+) site is built by Gln285, Glu299, and Asn301. Mn(2+)-binding residues include Gln285, Glu299, and Asn301. Residues 403–546 (QKGSQLDFSH…YHYSSYDEED (144 aa)) are oligomerization domain. The tract at residues 547–950 (EVALHSKPSI…AFAKSQAAAN (404 aa)) is carbamoyl phosphate synthetic domain. The region spanning 677-868 (SRVLDEAGLI…MAKAAALIGT (192 aa)) is the ATP-grasp 2 domain. Residues Arg713, Arg752, Leu754, Glu759, Gly784, Ile785, His786, Ser787, Gln827, and Glu839 each contribute to the ATP site. Mg(2+) is bound by residues Gln827, Glu839, and Asn841. 3 residues coordinate Mn(2+): Gln827, Glu839, and Asn841. An MGS-like domain is found at 951–1099 (NALPTEGKIF…AENLKALQNG (149 aa)). The allosteric domain stretch occupies residues 951-1099 (NALPTEGKIF…AENLKALQNG (149 aa)).

This sequence belongs to the CarB family. As to quaternary structure, composed of two chains; the small (or glutamine) chain promotes the hydrolysis of glutamine to ammonia, which is used by the large (or ammonia) chain to synthesize carbamoyl phosphate. Tetramer of heterodimers (alpha,beta)4. Requires Mg(2+) as cofactor. Mn(2+) serves as cofactor.

The catalysed reaction is hydrogencarbonate + L-glutamine + 2 ATP + H2O = carbamoyl phosphate + L-glutamate + 2 ADP + phosphate + 2 H(+). It carries out the reaction hydrogencarbonate + NH4(+) + 2 ATP = carbamoyl phosphate + 2 ADP + phosphate + 2 H(+). Its pathway is amino-acid biosynthesis; L-arginine biosynthesis; carbamoyl phosphate from bicarbonate: step 1/1. The protein operates within pyrimidine metabolism; UMP biosynthesis via de novo pathway; (S)-dihydroorotate from bicarbonate: step 1/3. Functionally, large subunit of the glutamine-dependent carbamoyl phosphate synthetase (CPSase). CPSase catalyzes the formation of carbamoyl phosphate from the ammonia moiety of glutamine, carbonate, and phosphate donated by ATP, constituting the first step of 2 biosynthetic pathways, one leading to arginine and/or urea and the other to pyrimidine nucleotides. The large subunit (synthetase) binds the substrates ammonia (free or transferred from glutamine from the small subunit), hydrogencarbonate and ATP and carries out an ATP-coupled ligase reaction, activating hydrogencarbonate by forming carboxy phosphate which reacts with ammonia to form carbamoyl phosphate. The protein is Carbamoyl phosphate synthase large chain of Arthrobacter sp. (strain FB24).